The sequence spans 444 residues: Presenilin sel-12 (444 aa).

At 1–45 the chain is on the cytoplasmic side; that stretch reads MPSTRRQQEGGGADAETHTVYGTNLITNRNSQEDENVVEEAELKY. A helical transmembrane segment spans residues 46-66; it reads GASHVIHLFVPVSLCMALVVF. The Lumenal segment spans residues 67–101; sequence TMNTITFYSQNNGRHLLYTPFVRETDSIVEKGLMS. A helical transmembrane segment spans residues 102 to 122; sequence LGNALVMLCVVVLMTVLLIVF. The Cytoplasmic portion of the chain corresponds to 123–130; that stretch reads YKYKFYKL. Residues 131-151 form a helical membrane-spanning segment; that stretch reads IHGWLIVSSFLLLFLFTTIYV. Over 152–163 the chain is Lumenal; the sequence is QEVLKSFDVSPS. The chain crosses the membrane as a helical span at residues 164–184; the sequence is ALLVLFGLGNYGVLGMMCIHW. Residues 185-189 lie on the Cytoplasmic side of the membrane; sequence KGPLR. Residues 190-210 traverse the membrane as a helical segment; sequence LQQFYLITMSALMALVFIKYL. Residues 211–212 lie on the Lumenal side of the membrane; sequence PE. The helical transmembrane segment at 213–233 threads the bilayer; it reads WTVWFVLFVISVWDLVAVLTP. The active site involves Asp-226. Topologically, residues 234–359 are cytoplasmic; the sequence is KGPLRYLVET…RHEEEERGVK (126 aa). Positions 275–331 are disordered; it reads TDPREPTSSDSNTSTAFPGEASCSSETPKRPKVKRIPQKVQIESNTTASTTQNSGVR. Polar residues-rich tracts occupy residues 282–300 and 315–329; these read SSDS…CSSE and QIES…QNSG. A helical membrane pass occupies residues 360 to 380; it reads LGLGDFIFYSVLLGKASSYFD. The active site involves Asp-364. At 381–384 the chain is on the lumenal side; sequence WNTT. The chain crosses the membrane as a helical span at residues 385-405; that stretch reads IACYVAILIGLCFTLVLLAVF. At 406–413 the chain is on the cytoplasmic side; that stretch reads KRALPALP. The PAL signature appears at 410 to 412; it reads PAL. The segment at residues 414–434 is an intramembrane region (helical); sequence ISIFSGLIFYFCTRWIITPFV. The Cytoplasmic portion of the chain corresponds to 435–444; it reads TQVSQKCLLY.

It belongs to the peptidase A22A family. Homodimer. Component of the gamma-secretase complex, a complex probably composed of the presenilin homodimer (sel-12, hop-1 or spe-4), nicastrin (aph-2), aph-1 and pen-2. Interacts with sel-10. In terms of tissue distribution, expressed in most neurons.

It is found in the endoplasmic reticulum membrane. The protein localises to the golgi apparatus membrane. In terms of biological role, probable catalytic subunit of the gamma-secretase complex, an endoprotease complex that catalyzes the intramembrane cleavage of integral membrane proteins such as Notch receptors (lin-12 or glp-1). Provides the major presenilin function compared to hop-1 and spe-4. Required cell-autonomously for correct neurite connectivity of the AIY cholinergic interneurons and their correct functioning in thermotaxis. Required for mesodermal patterning of muscle function. Promotes basement membrane gap formation during tissue remodeling. This chain is Presenilin sel-12, found in Caenorhabditis elegans.